A 575-amino-acid polypeptide reads, in one-letter code: Bifunctional decalin synthase calF (575 aa).

The signal sequence occupies residues 1–18; it reads MSFKPLLLSLSLLSPALG. N-linked (GlcNAc...) asparagine glycosylation is found at Asn-46, Asn-103, Asn-127, Asn-175, Asn-268, Asn-308, Asn-359, Asn-425, and Asn-485. Residues 118 to 297 form the FAD-binding PCMH-type domain; it reads LGNYASYSIN…LSMTTKVFQD (180 aa).

The protein belongs to the oxygen-dependent FAD-linked oxidoreductase family.

Its pathway is secondary metabolite biosynthesis. Functionally, bifunctional decaline synthase; part of the gene cluster that mediates the biosynthesis of calbistrin A and related compounds. Calbistrin A is a secondary metabolite with an interesting structure that was recently found to have bioactivity against leukemia cells. It consists of two polyketides linked by an ester bond: a bicyclic decalin containing polyketide and a linear 12 carbon dioic acid structure. The polyketide synthase calA is probably responsible for forming the decalin moiety. Because calA lacks a designated enoylreductase (ER) domain, the required activity is provided by the trans-enoyl reductase calK. Following release from the PKS, calF then probably catalyzes the oxidation and the subsequent Diels Alder cycloisomerization that lead to the formation of the decalin moiety. The decalin polyketide backbone includes two C-methyl groups, at C7 and C11 in backbone, of which the C7 position is probably methylated by the methyltransferase domain of calA. A candidate for adding the methyl group at C11, if not done by CalA, is the cluster methyltransferase calH. Several additional tailoring enzymes within the cluster could be involved in the modification of the decalin polyketide product. Those include the 3 cytochrome P450 monooxygenases CalE, CalG and CalL, of which one might be responsible for the introduction of the extra hydroxyl group attached to the backbone of the decalin moiety, at position C9 in the backbone, that allows for attachment of the linear moiety. One tailoring enzyme activity that is expected to be involved in biosynthesis of calbistrin is an acyltransferase for connecting the two polyketide synthase products, and which could be performed by the cluster acyltransferase calJ. The enzyme responsible for the biosynthesis of the linear moiety, probably a second PKS, has not been identified yet. This Penicillium decumbens protein is Bifunctional decalin synthase calF.